The following is a 525-amino-acid chain: Phosphoenolpyruvate carboxykinase (ATP) 1 (525 aa).

Substrate contacts are provided by Arg-55, Tyr-190, and Lys-196. ATP contacts are provided by residues Lys-196, His-215, and 231–239 (GLSGTGKTT). Lys-196 and His-215 together coordinate Mn(2+). Asp-252 provides a ligand contact to Mn(2+). Residues Glu-280, Arg-317, and Thr-442 each contribute to the ATP site. Residue Arg-317 participates in substrate binding.

The protein belongs to the phosphoenolpyruvate carboxykinase (ATP) family. Requires Mn(2+) as cofactor.

Its subcellular location is the cytoplasm. It carries out the reaction oxaloacetate + ATP = phosphoenolpyruvate + ADP + CO2. Its pathway is carbohydrate biosynthesis; gluconeogenesis. Its function is as follows. Involved in the gluconeogenesis. Catalyzes the conversion of oxaloacetate (OAA) to phosphoenolpyruvate (PEP) through direct phosphoryl transfer between the nucleoside triphosphate and OAA. This chain is Phosphoenolpyruvate carboxykinase (ATP) 1, found in Moorella thermoacetica (strain ATCC 39073 / JCM 9320).